The sequence spans 184 residues: ATP synthase subunit b, chloroplastic (184 aa).

The chain crosses the membrane as a helical span at residues 27–49 (LATNPINLSVVFGVLIFFGKGVL).

The protein belongs to the ATPase B chain family. In terms of assembly, F-type ATPases have 2 components, F(1) - the catalytic core - and F(0) - the membrane proton channel. F(1) has five subunits: alpha(3), beta(3), gamma(1), delta(1), epsilon(1). F(0) has four main subunits: a(1), b(1), b'(1) and c(10-14). The alpha and beta chains form an alternating ring which encloses part of the gamma chain. F(1) is attached to F(0) by a central stalk formed by the gamma and epsilon chains, while a peripheral stalk is formed by the delta, b and b' chains.

It is found in the plastid. Its subcellular location is the chloroplast thylakoid membrane. In terms of biological role, f(1)F(0) ATP synthase produces ATP from ADP in the presence of a proton or sodium gradient. F-type ATPases consist of two structural domains, F(1) containing the extramembraneous catalytic core and F(0) containing the membrane proton channel, linked together by a central stalk and a peripheral stalk. During catalysis, ATP synthesis in the catalytic domain of F(1) is coupled via a rotary mechanism of the central stalk subunits to proton translocation. Its function is as follows. Component of the F(0) channel, it forms part of the peripheral stalk, linking F(1) to F(0). This is ATP synthase subunit b, chloroplastic from Lobularia maritima (Sweet alyssum).